The sequence spans 55 residues: ATP synthase F(0) complex subunit 8 (55 aa).

The chain crosses the membrane as a helical span at residues 8 to 24 (PWFMIMLMTWFTYSLLI).

This sequence belongs to the ATPase protein 8 family. As to quaternary structure, component of the ATP synthase complex composed at least of ATP5F1A/subunit alpha, ATP5F1B/subunit beta, ATP5MC1/subunit c (homooctomer), MT-ATP6/subunit a, MT-ATP8/subunit 8, ATP5ME/subunit e, ATP5MF/subunit f, ATP5MG/subunit g, ATP5MK/subunit k, ATP5MJ/subunit j, ATP5F1C/subunit gamma, ATP5F1D/subunit delta, ATP5F1E/subunit epsilon, ATP5PF/subunit F6, ATP5PB/subunit b, ATP5PD/subunit d, ATP5PO/subunit OSCP. ATP synthase complex consists of a soluble F(1) head domain (subunits alpha(3) and beta(3)) - the catalytic core - and a membrane F(0) domain - the membrane proton channel (subunits c, a, 8, e, f, g, k and j). These two domains are linked by a central stalk (subunits gamma, delta, and epsilon) rotating inside the F1 region and a stationary peripheral stalk (subunits F6, b, d, and OSCP).

The protein localises to the mitochondrion membrane. Functionally, subunit 8, of the mitochondrial membrane ATP synthase complex (F(1)F(0) ATP synthase or Complex V) that produces ATP from ADP in the presence of a proton gradient across the membrane which is generated by electron transport complexes of the respiratory chain. ATP synthase complex consist of a soluble F(1) head domain - the catalytic core - and a membrane F(1) domain - the membrane proton channel. These two domains are linked by a central stalk rotating inside the F(1) region and a stationary peripheral stalk. During catalysis, ATP synthesis in the catalytic domain of F(1) is coupled via a rotary mechanism of the central stalk subunits to proton translocation. In vivo, can only synthesize ATP although its ATP hydrolase activity can be activated artificially in vitro. Part of the complex F(0) domain. The protein is ATP synthase F(0) complex subunit 8 of Coturnix japonica (Japanese quail).